A 369-amino-acid chain; its full sequence is Immunoglobulin superfamily member 5 (369 aa).

An N-terminal signal peptide occupies residues 1–24 (MEGSWRDVLAVLVILAQLTVSGSS). 2 consecutive Ig-like V-type domains span residues 25 to 125 (YQII…LSVQ) and 128 to 217 (GTLN…LTVN). At 25-239 (YQIIEGPRNV…GEGQALPTWA (215 aa)) the chain is on the extracellular side. N-linked (GlcNAc...) asparagine glycosylation is found at Asn-33 and Asn-45. Cys-46 and Cys-109 form a disulfide bridge. N-linked (GlcNAc...) asparagine glycosylation is found at Asn-146, Asn-196, and Asn-217. Cys-149 and Cys-201 are joined by a disulfide. Residues 240–260 (IILLAVAFSLLLILIIALIII) traverse the membrane as a helical segment. The Cytoplasmic portion of the chain corresponds to 261–369 (FCCCCVSRRE…PQKIRNVTIV (109 aa)). The disordered stretch occupies residues 321-354 (PKSGEVSLPEQRSSLPQQELDKHRPSPVTHPRVS).

It belongs to the immunoglobulin superfamily. As to quaternary structure, interacts with MAGI1 at tight junctions, forms a tripartite complex with NPHS1. Interacts with LNX1 isoform 2 via its PDZ 2 domain, it may also interact with other isoforms containing this domain. In terms of tissue distribution, in kidney, it is found in glomeruli and in the proximal tubules (at protein level).

It localises to the apical cell membrane. Its subcellular location is the cell junction. The protein resides in the tight junction. Functionally, provides, together with MAGI1, an adhesion machinery at tight junctions, which may regulate the permeability of kidney glomerulus and small intestinal epithelial cells. Mediates calcium-independent homophilic cell adhesion. In testis, it may function as a cell adhesion molecule rather than a tight-junction protein. It may participate in the adhesion between spermatogonia-spermatogonia, spermatogonia-Sertoli cells, and Sertoli cells-Sertoli cells. The sequence is that of Immunoglobulin superfamily member 5 (Igsf5) from Rattus norvegicus (Rat).